Consider the following 99-residue polypeptide: Small ribosomal subunit protein uS19c (99 aa).

The protein belongs to the universal ribosomal protein uS19 family.

The protein localises to the plastid. The protein resides in the chloroplast. Functionally, protein S19 forms a complex with S13 that binds strongly to the 16S ribosomal RNA. This chain is Small ribosomal subunit protein uS19c, found in Oenothera biennis (German evening primrose).